Consider the following 450-residue polypeptide: Tubulin alpha chain (450 aa).

Gln11 lines the GTP pocket. Lys40 is modified (N6-acetyllysine). GTP-binding residues include Glu71, Ser140, Gly144, Thr145, Thr179, Asn206, and Asn228. A Mg(2+)-binding site is contributed by Glu71. Glu254 is a catalytic residue.

The protein belongs to the tubulin family. Dimer of alpha and beta chains. A typical microtubule is a hollow water-filled tube with an outer diameter of 25 nm and an inner diameter of 15 nM. Alpha-beta heterodimers associate head-to-tail to form protofilaments running lengthwise along the microtubule wall with the beta-tubulin subunit facing the microtubule plus end conferring a structural polarity. Microtubules usually have 13 protofilaments but different protofilament numbers can be found in some organisms and specialized cells. It depends on Mg(2+) as a cofactor. Post-translationally, undergoes a tyrosination/detyrosination cycle, the cyclic removal and re-addition of a C-terminal tyrosine residue by the enzymes tubulin tyrosine carboxypeptidase (TTCP) and tubulin tyrosine ligase (TTL), respectively. In terms of processing, acetylation of alpha chains at Lys-40 stabilizes microtubules and affects affinity and processivity of microtubule motors. This modification has a role in multiple cellular functions, ranging from cell motility, cell cycle progression or cell differentiation to intracellular trafficking and signaling.

The protein resides in the cytoplasm. The protein localises to the cytoskeleton. The catalysed reaction is GTP + H2O = GDP + phosphate + H(+). Functionally, tubulin is the major constituent of microtubules, a cylinder consisting of laterally associated linear protofilaments composed of alpha- and beta-tubulin heterodimers. Microtubules grow by the addition of GTP-tubulin dimers to the microtubule end, where a stabilizing cap forms. Below the cap, tubulin dimers are in GDP-bound state, owing to GTPase activity of alpha-tubulin. In Haemonchus contortus (Barber pole worm), this protein is Tubulin alpha chain.